The following is a 343-amino-acid chain: Multidrug resistance protein MdtN (343 aa).

Over 1-12 (MESTPKKAPRSK) the chain is Cytoplasmic. The helical; Signal-anchor for type II membrane protein transmembrane segment at 13–33 (FPALLVVALALVALVFVIWRV) threads the bilayer. Residues 34 to 343 (DSAPSTNDAY…ASAVANLEPQ (310 aa)) are Periplasmic-facing.

The protein belongs to the membrane fusion protein (MFP) (TC 8.A.1) family. As to quaternary structure, could be part of a tripartite efflux system composed of MdtN, MdtO and MdtP.

The protein localises to the cell inner membrane. Could be involved in resistance to puromycin, acriflavine and tetraphenylarsonium chloride. The sequence is that of Multidrug resistance protein MdtN (mdtN) from Escherichia coli O6:H1 (strain CFT073 / ATCC 700928 / UPEC).